The chain runs to 154 residues: Large ribosomal subunit protein uL13 (154 aa).

It belongs to the universal ribosomal protein uL13 family. In terms of assembly, part of the 50S ribosomal subunit.

Its function is as follows. This protein is one of the early assembly proteins of the 50S ribosomal subunit, although it is not seen to bind rRNA by itself. It is important during the early stages of 50S assembly. The chain is Large ribosomal subunit protein uL13 from Bartonella henselae (strain ATCC 49882 / DSM 28221 / CCUG 30454 / Houston 1) (Rochalimaea henselae).